Here is an 85-residue protein sequence, read N- to C-terminus: Translation initiation factor IF-1 2 (85 aa).

In terms of domain architecture, S1-like spans 1–72 (MAKEELIEMQ…TKGRITFRHL (72 aa)).

Belongs to the IF-1 family. Component of the 30S ribosomal translation pre-initiation complex which assembles on the 30S ribosome in the order IF-2 and IF-3, IF-1 and N-formylmethionyl-tRNA(fMet); mRNA recruitment can occur at any time during PIC assembly.

The protein localises to the cytoplasm. One of the essential components for the initiation of protein synthesis. Stabilizes the binding of IF-2 and IF-3 on the 30S subunit to which N-formylmethionyl-tRNA(fMet) subsequently binds. Helps modulate mRNA selection, yielding the 30S pre-initiation complex (PIC). Upon addition of the 50S ribosomal subunit IF-1, IF-2 and IF-3 are released leaving the mature 70S translation initiation complex. The chain is Translation initiation factor IF-1 2 from Paracidovorax citrulli (strain AAC00-1) (Acidovorax citrulli).